We begin with the raw amino-acid sequence, 1151 residues long: UDP-N-acetylglucosamine--peptide N-acetylglucosaminyltransferase (1151 aa).

TPR repeat units follow at residues 125–158, 193–226, 227–260, 261–294, 295–328, 329–362, 363–396, 397–430, 431–464, 465–498, 499–532, and 533–566; these read LKKV…DPNN, AEAY…KPEF, IDAY…NPDL, YCVR…QPQF, AVAW…DPNF, LDAY…SGNH, AVVH…QPHF, PDAY…CPTH, ADSQ…YPEF, AAAH…APTF, ADAY…NPAF, and ADAH…KPDF. Residues 567–577 form a TPR 13; truncated repeat; the sequence is PDAYCNLAHCH. A Nuclear localization signal motif is present at residues 591-607; it reads RKLVQIVEDQLCKKRLP. His-612 serves as the catalytic Proton acceptor. Residues Gln-954, Lys-957, 1010–1013, 1016–1019, 1034–1036, and Asp-1040 contribute to the UDP site; these read VAAK, HVRR, and GHT.

The protein belongs to the glycosyltransferase 41 family. O-GlcNAc transferase subfamily.

The protein resides in the nucleus. It localises to the cytoplasm. It is found in the perinuclear region. It carries out the reaction L-seryl-[protein] + UDP-N-acetyl-alpha-D-glucosamine = 3-O-(N-acetyl-beta-D-glucosaminyl)-L-seryl-[protein] + UDP + H(+). It catalyses the reaction L-threonyl-[protein] + UDP-N-acetyl-alpha-D-glucosamine = 3-O-(N-acetyl-beta-D-glucosaminyl)-L-threonyl-[protein] + UDP + H(+). It functions in the pathway protein modification; protein glycosylation. In terms of biological role, addition of nucleotide-activated sugars directly onto the polypeptide through O-glycosidic linkage with the hydroxyl of serine or threonine. Influences tap habituation in the mechanosensory neurons cell autonomously. The sequence is that of UDP-N-acetylglucosamine--peptide N-acetylglucosaminyltransferase (ogt-1) from Caenorhabditis elegans.